Here is a 298-residue protein sequence, read N- to C-terminus: uncharacterized protein (298 aa).

The active site involves Asp-119.

This sequence belongs to the pseudouridine synthase RluA family.

It carries out the reaction a uridine in RNA = a pseudouridine in RNA. This is an uncharacterized protein from Helicobacter pylori (strain ATCC 700392 / 26695) (Campylobacter pylori).